The primary structure comprises 335 residues: Cathepsin B (335 aa).

The N-terminal stretch at 1–17 is a signal peptide; sequence MWRLLATLSCLVLLTSA. The propeptide at 18–79 is activation peptide; sequence RESLHFQPLS…QRAAFAADMI (62 aa). 6 disulfides stabilise this stretch: cysteine 93-cysteine 122, cysteine 105-cysteine 150, cysteine 141-cysteine 207, cysteine 142-cysteine 146, cysteine 179-cysteine 211, and cysteine 187-cysteine 198. Cysteine 108 is an active-site residue. A glycan (N-linked (GlcNAc...) asparagine) is linked at asparagine 192. Lysine 220 is subject to N6-acetyllysine. Cysteine 227 and cysteine 331 are oxidised to a cystine. Residues histidine 278 and asparagine 298 contribute to the active site. A propeptide spanning residues 333–335 is cleaved from the precursor; the sequence is PHF.

Belongs to the peptidase C1 family. As to quaternary structure, dimer of a heavy chain and a light chain cross-linked by a disulfide bond. Interacts with SRPX2. Directly interacts with SHKBP1. As to expression, expressed in heart (at protein level).

The protein localises to the lysosome. The protein resides in the melanosome. Its subcellular location is the secreted. It localises to the extracellular space. It is found in the apical cell membrane. It catalyses the reaction Hydrolysis of proteins with broad specificity for peptide bonds. Preferentially cleaves -Arg-Arg-|-Xaa bonds in small molecule substrates (thus differing from cathepsin L). In addition to being an endopeptidase, shows peptidyl-dipeptidase activity, liberating C-terminal dipeptides.. Thiol protease which is believed to participate in intracellular degradation and turnover of proteins. Cleaves matrix extracellular phosphoglycoprotein MEPE. Involved in the solubilization of cross-linked TG/thyroglobulin in the thyroid follicle lumen. Has also been implicated in tumor invasion and metastasis. The chain is Cathepsin B (CTSB) from Sus scrofa (Pig).